The sequence spans 285 residues: Elongation factor Ts (285 aa).

The involved in Mg(2+) ion dislocation from EF-Tu stretch occupies residues 82 to 85; it reads TDFV.

This sequence belongs to the EF-Ts family.

It localises to the cytoplasm. Its function is as follows. Associates with the EF-Tu.GDP complex and induces the exchange of GDP to GTP. It remains bound to the aminoacyl-tRNA.EF-Tu.GTP complex up to the GTP hydrolysis stage on the ribosome. The chain is Elongation factor Ts from Yersinia pseudotuberculosis serotype O:1b (strain IP 31758).